Reading from the N-terminus, the 936-residue chain is Protocadherin alpha-5 (936 aa).

The first 28 residues, 1-28, serve as a signal peptide directing secretion; it reads MVYSRRGSLGSRLLLLWLLLAYWKAGSG. Residues 29 to 696 are Extracellular-facing; sequence QLHYSIPEEA…GPEAALVDVN (668 aa). Cadherin domains follow at residues 33–132, 156–241, 242–349, 350–454, 455–564, and 580–677; these read SIPE…PPRF, ASDL…APEF, DKSI…TPEM, AITT…LRAF, AQPQ…APAL, and VPRS…APKA. 3 N-linked (GlcNAc...) asparagine glycosylation sites follow: N264, N448, and N547. A helical transmembrane segment spans residues 697-717; sequence VYLIIAICAVSSLLVLTLLLY. The Cytoplasmic portion of the chain corresponds to 718–936; it reads TALRCSAQPT…GNSTTDNSDQ (219 aa). Disordered stretches follow at residues 759 to 793, 815 to 875, and 887 to 936; these read SGEAPPKTDLMAFSPSLPQGPTSTDNPRQPNPDWR, RAGP…DKFI, and QEPA…NSDQ. 5 PXXP repeats span residues 773–776, 785–788, 818–821, 873–876, and 877–890; these read PSLP, PRQP, PGGP, KFII, and PGSPAIISIRQEPA. A 5 X 4 AA repeats of P-X-X-P region spans residues 773 to 890; the sequence is PSLPQGPTST…AIISIRQEPA (118 aa). A compositionally biased stretch (polar residues) spans 774 to 786; the sequence is SLPQGPTSTDNPR. Residues 895-909 show a composition bias toward basic and acidic residues; that stretch reads DKSDFITFGKKEETK.

The protein localises to the cell membrane. Functionally, potential calcium-dependent cell-adhesion protein. May be involved in the establishment and maintenance of specific neuronal connections in the brain. The chain is Protocadherin alpha-5 (PCDHA5) from Pan troglodytes (Chimpanzee).